The following is a 446-amino-acid chain: Tubulin beta-2 chain (446 aa).

GTP contacts are provided by Gln-11, Glu-69, Ser-138, Gly-142, Thr-143, Gly-144, Asn-204, and Asn-226. Glu-69 contributes to the Mg(2+) binding site. Residues 426 to 446 are disordered; it reads QEAGIDEEEEYEEEAPAEHEE. Residues 429-440 are compositionally biased toward acidic residues; that stretch reads GIDEEEEYEEEA.

Belongs to the tubulin family. In terms of assembly, dimer of alpha and beta chains. A typical microtubule is a hollow water-filled tube with an outer diameter of 25 nm and an inner diameter of 15 nM. Alpha-beta heterodimers associate head-to-tail to form protofilaments running lengthwise along the microtubule wall with the beta-tubulin subunit facing the microtubule plus end conferring a structural polarity. Microtubules usually have 13 protofilaments but different protofilament numbers can be found in some organisms and specialized cells. Requires Mg(2+) as cofactor.

Its subcellular location is the cytoplasm. The protein localises to the cytoskeleton. Its function is as follows. Tubulin is the major constituent of microtubules, a cylinder consisting of laterally associated linear protofilaments composed of alpha- and beta-tubulin heterodimers. Microtubules grow by the addition of GTP-tubulin dimers to the microtubule end, where a stabilizing cap forms. Below the cap, tubulin dimers are in GDP-bound state, owing to GTPase activity of alpha-tubulin. This Hypocrea virens (Gliocladium virens) protein is Tubulin beta-2 chain.